Here is a 416-residue protein sequence, read N- to C-terminus: Subtilisin-like protease 12 (416 aa).

The signal sequence occupies residues 1–19 (MSILKMMLIYFAIFWVVNA). Positions 20 to 116 (AQLLDIDSQG…VEPNKEMQVA (97 aa)) are excised as a propeptide. The 81-residue stretch at 35–115 (YIVVMKDRVS…FVEPNKEMQV (81 aa)) folds into the Inhibitor I9 domain. N-linked (GlcNAc...) asparagine glycosylation is found at N123, N136, and N150. One can recognise a Peptidase S8 domain in the interval 125-416 (TWGLSRISHK…NKLLYNGSGA (292 aa)). Catalysis depends on charge relay system residues D157 and H188. N249, N305, N334, and N353 each carry an N-linked (GlcNAc...) asparagine glycan. The active-site Charge relay system is the S362. N-linked (GlcNAc...) asparagine glycosylation is found at N404 and N412.

The protein belongs to the peptidase S8 family.

The protein resides in the secreted. Its function is as follows. Secreted subtilisin-like serine protease with keratinolytic activity that contributes to pathogenicity. This is Subtilisin-like protease 12 (SUB12) from Arthroderma benhamiae (strain ATCC MYA-4681 / CBS 112371) (Trichophyton mentagrophytes).